The following is a 79-amino-acid chain: Sec-independent protein translocase protein TatA (79 aa).

A helical transmembrane segment spans residues 1–21; it reads MGGFTSIWHWVIVLLVIVLLF. Residues 54–79 form a disordered region; it reads ELKTLDAQATQTKVHETSEIKSKQES. The span at 66-79 shows a compositional bias: basic and acidic residues; it reads KVHETSEIKSKQES.

The protein belongs to the TatA/E family. The Tat system comprises two distinct complexes: a TatABC complex, containing multiple copies of TatA, TatB and TatC subunits, and a separate TatA complex, containing only TatA subunits. Substrates initially bind to the TatABC complex, which probably triggers association of the separate TatA complex to form the active translocon.

The protein localises to the cell inner membrane. Its function is as follows. Part of the twin-arginine translocation (Tat) system that transports large folded proteins containing a characteristic twin-arginine motif in their signal peptide across membranes. TatA could form the protein-conducting channel of the Tat system. In Helicobacter pylori (strain J99 / ATCC 700824) (Campylobacter pylori J99), this protein is Sec-independent protein translocase protein TatA.